Reading from the N-terminus, the 426-residue chain is Serine--tRNA ligase (426 aa).

Thr233–Glu235 is an L-serine binding site. Arg264–Glu266 is a binding site for ATP. Glu287 lines the L-serine pocket. Residue Glu351–Ser354 coordinates ATP. Ser387 is an L-serine binding site.

The protein belongs to the class-II aminoacyl-tRNA synthetase family. Type-1 seryl-tRNA synthetase subfamily. Homodimer. The tRNA molecule binds across the dimer.

Its subcellular location is the cytoplasm. The catalysed reaction is tRNA(Ser) + L-serine + ATP = L-seryl-tRNA(Ser) + AMP + diphosphate + H(+). The enzyme catalyses tRNA(Sec) + L-serine + ATP = L-seryl-tRNA(Sec) + AMP + diphosphate + H(+). It participates in aminoacyl-tRNA biosynthesis; selenocysteinyl-tRNA(Sec) biosynthesis; L-seryl-tRNA(Sec) from L-serine and tRNA(Sec): step 1/1. Its function is as follows. Catalyzes the attachment of serine to tRNA(Ser). Is also able to aminoacylate tRNA(Sec) with serine, to form the misacylated tRNA L-seryl-tRNA(Sec), which will be further converted into selenocysteinyl-tRNA(Sec). This Pseudomonas putida (strain ATCC 700007 / DSM 6899 / JCM 31910 / BCRC 17059 / LMG 24140 / F1) protein is Serine--tRNA ligase.